We begin with the raw amino-acid sequence, 232 residues long: Biosynthetic peptidoglycan transglycosylase (232 aa).

Residues tyrosine 12–proline 31 form a helical membrane-spanning segment.

This sequence belongs to the glycosyltransferase 51 family.

The protein localises to the cell inner membrane. The catalysed reaction is [GlcNAc-(1-&gt;4)-Mur2Ac(oyl-L-Ala-gamma-D-Glu-L-Lys-D-Ala-D-Ala)](n)-di-trans,octa-cis-undecaprenyl diphosphate + beta-D-GlcNAc-(1-&gt;4)-Mur2Ac(oyl-L-Ala-gamma-D-Glu-L-Lys-D-Ala-D-Ala)-di-trans,octa-cis-undecaprenyl diphosphate = [GlcNAc-(1-&gt;4)-Mur2Ac(oyl-L-Ala-gamma-D-Glu-L-Lys-D-Ala-D-Ala)](n+1)-di-trans,octa-cis-undecaprenyl diphosphate + di-trans,octa-cis-undecaprenyl diphosphate + H(+). It functions in the pathway cell wall biogenesis; peptidoglycan biosynthesis. Its function is as follows. Peptidoglycan polymerase that catalyzes glycan chain elongation from lipid-linked precursors. The polypeptide is Biosynthetic peptidoglycan transglycosylase (Pseudomonas aeruginosa (strain ATCC 15692 / DSM 22644 / CIP 104116 / JCM 14847 / LMG 12228 / 1C / PRS 101 / PAO1)).